Reading from the N-terminus, the 103-residue chain is Hexon-interlacing protein (103 aa).

The tract at residues 25 to 45 (RQNVTGSDLGGKPVPSDVLES) is disordered. Residues 72–99 (LDDLKTQVAAMQNSVTAIQEELKDLKQR) are a coiled coil.

The protein belongs to the adenoviridae hexon-interlacing protein family. In terms of assembly, homotrimer. Interacts with hexon protein; this interaction tethers the hexons together. Self-interacts with adjacent proteins. Interacts with kinesin light chain KLC1; this interaction leads to capsid disruption at the nuclear pore complex during virus entry into host cell.

Its subcellular location is the virion. The protein resides in the host nucleus. Functionally, structural component of the virion that acts as a cement protein on the capsid exterior and forms triskelion structures consisting of three molecules that stabilize three hexon trimers at the center of each icosahedral facet and fixes the peripentonal hexons. Dispensable for assembly. During virus entry, recruits the anterograde motor kinesin-1 to the capsid docked at the nuclear pore complex thereby subjecting the docked capsid to a pulling force. The resulting tension leads to capsid disruption, dispersion of capsid fragments toward cell periphery and eventually viral DNA entry into the host nucleus. The sequence is that of Hexon-interlacing protein from Canine adenovirus serotype 1 (strain CLL) (CAdV-1).